Consider the following 370-residue polypeptide: Histidinol-phosphate aminotransferase 3 (370 aa).

At Lys229 the chain carries N6-(pyridoxal phosphate)lysine.

Belongs to the class-II pyridoxal-phosphate-dependent aminotransferase family. Histidinol-phosphate aminotransferase subfamily. As to quaternary structure, homodimer. It depends on pyridoxal 5'-phosphate as a cofactor.

It carries out the reaction L-histidinol phosphate + 2-oxoglutarate = 3-(imidazol-4-yl)-2-oxopropyl phosphate + L-glutamate. Its pathway is amino-acid biosynthesis; L-histidine biosynthesis; L-histidine from 5-phospho-alpha-D-ribose 1-diphosphate: step 7/9. This Rhizobium meliloti (strain 1021) (Ensifer meliloti) protein is Histidinol-phosphate aminotransferase 3 (hisC3).